The sequence spans 132 residues: Small ribosomal subunit protein uS11c (132 aa).

Belongs to the universal ribosomal protein uS11 family. In terms of assembly, part of the 30S ribosomal subunit.

The protein resides in the plastid. It localises to the chloroplast. This is Small ribosomal subunit protein uS11c from Cryptomeria japonica (Japanese cedar).